An 82-amino-acid chain; its full sequence is Small ribosomal subunit protein bS16 (82 aa).

Belongs to the bacterial ribosomal protein bS16 family.

This chain is Small ribosomal subunit protein bS16, found in Methylobacillus flagellatus (strain ATCC 51484 / DSM 6875 / VKM B-1610 / KT).